Here is a 78-residue protein sequence, read N- to C-terminus: Large ribosomal subunit protein uL30 (78 aa).

The segment covering 58 to 68 has biased composition (acidic residues); it reads DDTSPDAETGA. The tract at residues 58 to 78 is disordered; sequence DDTSPDAETGADLERDGGNRS. Residues 69-78 show a composition bias toward basic and acidic residues; the sequence is DLERDGGNRS.

This sequence belongs to the universal ribosomal protein uL30 family. Part of the 50S ribosomal subunit.

The polypeptide is Large ribosomal subunit protein uL30 (Roseiflexus sp. (strain RS-1)).